Reading from the N-terminus, the 165-residue chain is DNA mimic protein DMP19 (165 aa).

It belongs to the DMP19-like protein family. Monomer. Homodimer. The monomeric form of DMP19 interacts with the DNA-binding protein HU homodimer with 1:1 stoichiometry. The dimeric form of DMP19 interacts with the Neisseria hypothetical transcription factor (NHTF) dimer.

With respect to regulation, activity can be modulated in vitro by crown ethers, which are small cyclic polyethers that can modify protein surface behavior dramatically by stabilizing either intra- or intermolecular interactions, thereby probably altering the protein's tertiary and quaternary structure. In terms of biological role, acts as a DNA mimic. Interacts with DNA-binding proteins and prevents their binding to DNA by occupying the DNA binding sites on the proteins, acting as a competitive inhibitor. DMP19 is a bifunctional DNA mimic protein involved in controlling nucleoid formation as well as gene regulation. This bifunctionality depends on different oligomeric states. The monomeric form interacts with the DNA-binding protein HU, which prevents HU from binding to DNA and forming nucleoids. The dimeric form interacts with the Neisseria hypothetical transcription factor (NHTF) and prevents NHTF from binding to its DNA-binding sites, thereby blocking its repressor activity and influencing expression of the target genes. DMP19 might use these different oligomerizations to regulate genes in two steps: the monomeric form may first release selected gene regions in chromosomal DNA by preventing HU from binding to DNA and forming nucleoids, then the dimeric form blocks the gene repressor activity of NHTF and ensures the continued expression of NHTF-controlled genes. This is DNA mimic protein DMP19 from Neisseria meningitidis serogroup B (strain ATCC BAA-335 / MC58).